We begin with the raw amino-acid sequence, 240 residues long: Transmembrane emp24 domain-containing protein 6 (240 aa).

The first 21 residues, 1 to 21 (MFPLLFVAGLVVLNLVSSARS), serve as a signal peptide directing secretion. The Lumenal segment spans residues 22–200 (QKTEPLSGTG…FFLLQSNYNY (179 aa)). In terms of domain architecture, GOLD spans 53–138 (TECFWQFAHQ…SVQVYLNFGV (86 aa)). Residues asparagine 107 and asparagine 156 are each glycosylated (N-linked (GlcNAc...) asparagine). A helical transmembrane segment spans residues 201-223 (VNWWSTAQSLVIVLSGILQLYFL). Residues 224-240 (KRLFNTPMTTETQKPRC) lie on the Cytoplasmic side of the membrane.

The protein belongs to the EMP24/GP25L family.

The protein localises to the endoplasmic reticulum membrane. This Bos taurus (Bovine) protein is Transmembrane emp24 domain-containing protein 6 (TMED6).